Reading from the N-terminus, the 90-residue chain is UPF0335 protein RPD_1405 (90 aa).

This sequence belongs to the UPF0335 family.

This Rhodopseudomonas palustris (strain BisB5) protein is UPF0335 protein RPD_1405.